Consider the following 194-residue polypeptide: Imidazoleglycerol-phosphate dehydratase (194 aa).

It belongs to the imidazoleglycerol-phosphate dehydratase family.

The protein resides in the cytoplasm. It catalyses the reaction D-erythro-1-(imidazol-4-yl)glycerol 3-phosphate = 3-(imidazol-4-yl)-2-oxopropyl phosphate + H2O. It functions in the pathway amino-acid biosynthesis; L-histidine biosynthesis; L-histidine from 5-phospho-alpha-D-ribose 1-diphosphate: step 6/9. The sequence is that of Imidazoleglycerol-phosphate dehydratase from Bacillus cereus (strain ATCC 14579 / DSM 31 / CCUG 7414 / JCM 2152 / NBRC 15305 / NCIMB 9373 / NCTC 2599 / NRRL B-3711).